Consider the following 1111-residue polypeptide: Myosin IB heavy chain (1111 aa).

Positions 9 to 691 (QGTDDLVMLP…TVFLLEEALD (683 aa)) constitute a Myosin motor domain. 102–109 (GESGAGKT) contacts ATP. Ser-332 is subject to Phosphoserine. Residues 547–627 (GSLQKKRPTT…GFAYRNTFDK (81 aa)) form an actin-binding region. A TH1 domain is found at 729-913 (KERQRNSIDR…KGLIGTIASG (185 aa)). Residues 910–1058 (IASGLPSSTD…PAPQPSRPTA (149 aa)) are disordered. Positions 914–928 (LPSSTDSTPKNYNPN) are enriched in polar residues. Low complexity-rich tracts occupy residues 929-944 (SMSQ…QSAG), 952-967 (GAGQ…QQRP), and 991-1012 (PMGA…LPQP). Over residues 1017 to 1040 (GAPGGRGAPMGRGAPGGGPAGAGG) the composition is skewed to gly residues. An SH3 domain is found at 1053–1111 (PSRPTAKALYDYDASSTDELSFKEGDIIFIVQKDNGGWTQGELKSGQKGWAPTNYLQYN).

Belongs to the TRAFAC class myosin-kinesin ATPase superfamily. Myosin family. As to quaternary structure, myosin I heavy chain is single-headed. Dimer of a heavy and a light chain. Inability to self-assemble into filaments.

It is found in the cell projection. The protein localises to the pseudopodium. Its subcellular location is the cytoplasm. It localises to the cell cortex. Myosin is a protein that binds to actin and has ATPase activity that is activated by actin. Myosin IB may have a role in chemotaxis and aggregation; it could serve to stabilize and even retract cortical structures, such as pseudopods and lamellopods. Involved in the whole cell motility of aggregation-stages cells. Overexpression results in significant decrease in the rate of cellular translocation and fluid-phase pinocytosis and abnormalities in the normal rearrangement of the actin cytoskeleton. The chain is Myosin IB heavy chain (myoB) from Dictyostelium discoideum (Social amoeba).